The sequence spans 136 residues: ATP synthase epsilon chain (136 aa).

It belongs to the ATPase epsilon chain family. F-type ATPases have 2 components, CF(1) - the catalytic core - and CF(0) - the membrane proton channel. CF(1) has five subunits: alpha(3), beta(3), gamma(1), delta(1), epsilon(1). CF(0) has three main subunits: a, b and c.

The protein resides in the cell membrane. Functionally, produces ATP from ADP in the presence of a proton gradient across the membrane. The polypeptide is ATP synthase epsilon chain (Exiguobacterium sp. (strain ATCC BAA-1283 / AT1b)).